We begin with the raw amino-acid sequence, 277 residues long: Large ribosomal subunit protein uL2 (277 aa).

Residues 222–277 (GVAMNPVDHPHGGGEGRTSGGRHPVTPWGKPTKGKKTRSNKATDKFIMRSRHQRKK) form a disordered region.

Belongs to the universal ribosomal protein uL2 family. Part of the 50S ribosomal subunit. Forms a bridge to the 30S subunit in the 70S ribosome.

Its function is as follows. One of the primary rRNA binding proteins. Required for association of the 30S and 50S subunits to form the 70S ribosome, for tRNA binding and peptide bond formation. It has been suggested to have peptidyltransferase activity; this is somewhat controversial. Makes several contacts with the 16S rRNA in the 70S ribosome. In Brucella canis (strain ATCC 23365 / NCTC 10854 / RM-666), this protein is Large ribosomal subunit protein uL2.